Consider the following 92-residue polypeptide: Small ribosomal subunit protein uS19 (92 aa).

The disordered stretch occupies residues 73 to 92; it reads EFSPTRSFRGHAGAKNKGKK. Residues 80–92 are compositionally biased toward basic residues; it reads FRGHAGAKNKGKK.

Belongs to the universal ribosomal protein uS19 family.

Functionally, protein S19 forms a complex with S13 that binds strongly to the 16S ribosomal RNA. The sequence is that of Small ribosomal subunit protein uS19 from Flavobacterium psychrophilum (strain ATCC 49511 / DSM 21280 / CIP 103535 / JIP02/86).